A 196-amino-acid chain; its full sequence is Imidazoleglycerol-phosphate dehydratase (196 aa).

The protein belongs to the imidazoleglycerol-phosphate dehydratase family.

It is found in the cytoplasm. It catalyses the reaction D-erythro-1-(imidazol-4-yl)glycerol 3-phosphate = 3-(imidazol-4-yl)-2-oxopropyl phosphate + H2O. Its pathway is amino-acid biosynthesis; L-histidine biosynthesis; L-histidine from 5-phospho-alpha-D-ribose 1-diphosphate: step 6/9. This is Imidazoleglycerol-phosphate dehydratase from Clostridium botulinum (strain Langeland / NCTC 10281 / Type F).